A 569-amino-acid chain; its full sequence is Vacuolar protein sorting-associated protein 45 homolog (569 aa).

It belongs to the STXBP/unc-18/SEC1 family. As to quaternary structure, interacts with both SYP41 or SYP42 and VTI12, but in different domains of the trans-Golgi network. Does not interact on the pervacuolar compartment with VTI11, SYP21 or SYP22, or on the cis-Golgi with SYP31. Interacts at the trans-Golgi network (TGN) with the SYP41/SYP61/VTI12 SNARE complex. As to expression, highly expressed in roots, lower expression in leaves, stems and flowers.

The protein localises to the golgi apparatus. The protein resides in the trans-Golgi network membrane. Its subcellular location is the early endosome. In terms of biological role, involved in the protein transport to the vacuole, probably at the level of vesicle fusion at the trans-Golgi network (TGN) and not in transport from the TGN to the prevacuolar compartment, by promoting the recycling of vacuolar sorting receptors back to the TGN. Involved in early endosomal vesicle trafficking, particularly at the trans-Golgi-network/early endosome (TGN/EE) thus residing in early endocytic route. Together with BIG5/BEN1 required for polar PIN-FORMED (PIN) proteins localization, for their dynamic repolarization, and consequently for auxin activity gradient formation and auxin-related developmental processes (e.g. embryonic patterning, organogenesis and vasculature venation patterning). Necessary for pollen germination and for cell expansion. Binds syntaxins. The polypeptide is Vacuolar protein sorting-associated protein 45 homolog (Arabidopsis thaliana (Mouse-ear cress)).